Here is a 136-residue protein sequence, read N- to C-terminus: EDESTVLVDNKCQCVRITSRIIRDPDNPSEDIVERNIRIIVPLNTRENISDPTSPLRTEFKYNLANLCKKCDPTEIELDNQVFTASQSNICPDDDYSETCYTYDRNKCYTTLVPITHRGGTRMVKATLTPDSCYPD.

3 cysteine pairs are disulfide-bonded: cysteine 12–cysteine 100, cysteine 71–cysteine 91, and cysteine 108–cysteine 133. A glycan (N-linked (GlcNAc...) (complex) asparagine) is linked at asparagine 48.

As to quaternary structure, part of the secretory IgA (sIgA) complex that consists of two, four or five IgA monomers, and two additional non-Ig polypeptides, namely the JCHAIN and the secretory component (the proteolytic product of PIGR). Part of the secretory IgM (sIgM) complex that consist of five IgM monomers, and two additional non-Ig polypeptides, namely the JCHAIN and the secretory component (the proteolytic product of PIGR). JCHAIN-containing IgM interacts (via CH4 domain) with FCRM (via Ig-like domain).

The protein resides in the secreted. Serves to link two monomer units of either IgM or IgA. In the case of IgM, the J chain-joined dimer is a nucleating unit for the IgM pentamer, and in the case of IgA it induces dimers and/or larger polymers. It also helps to bind these immunoglobulins to secretory component. This is Immunoglobulin J chain from Oryctolagus cuniculus (Rabbit).